A 137-amino-acid chain; its full sequence is Small ribosomal subunit protein uS12 (137 aa).

Disordered regions lie at residues 1-22 (MPTINQLVRKGRKSHKGKSKSP) and 37-57 (KNPSPQKRGVATRVGTMTPKK). Residues 9 to 19 (RKGRKSHKGKS) are compositionally biased toward basic residues. Position 102 is a 3-methylthioaspartic acid (Asp102).

Belongs to the universal ribosomal protein uS12 family. In terms of assembly, part of the 30S ribosomal subunit. Contacts proteins S8 and S17. May interact with IF1 in the 30S initiation complex.

With S4 and S5 plays an important role in translational accuracy. Functionally, interacts with and stabilizes bases of the 16S rRNA that are involved in tRNA selection in the A site and with the mRNA backbone. Located at the interface of the 30S and 50S subunits, it traverses the body of the 30S subunit contacting proteins on the other side and probably holding the rRNA structure together. The combined cluster of proteins S8, S12 and S17 appears to hold together the shoulder and platform of the 30S subunit. The sequence is that of Small ribosomal subunit protein uS12 from Limosilactobacillus fermentum (strain NBRC 3956 / LMG 18251) (Lactobacillus fermentum).